The chain runs to 341 residues: Phosphate acyltransferase (341 aa).

It belongs to the PlsX family. Homodimer. Probably interacts with PlsY.

It is found in the cytoplasm. The enzyme catalyses a fatty acyl-[ACP] + phosphate = an acyl phosphate + holo-[ACP]. It participates in lipid metabolism; phospholipid metabolism. Catalyzes the reversible formation of acyl-phosphate (acyl-PO(4)) from acyl-[acyl-carrier-protein] (acyl-ACP). This enzyme utilizes acyl-ACP as fatty acyl donor, but not acyl-CoA. The chain is Phosphate acyltransferase from Nostoc sp. (strain PCC 7120 / SAG 25.82 / UTEX 2576).